Here is a 100-residue protein sequence, read N- to C-terminus: MSWYSFGNDRSLLILKLYVQPGARQTEAVGICGEELKIKLAALPVDGKANRALTEFLAKRFNVPRKNITLKRGEQSRHKVVEVCQSSNGPEVLFSEMRAE.

This sequence belongs to the UPF0235 family.

The protein is UPF0235 protein NE0395 of Nitrosomonas europaea (strain ATCC 19718 / CIP 103999 / KCTC 2705 / NBRC 14298).